We begin with the raw amino-acid sequence, 350 residues long: L-serine dehydratase (350 aa).

Lys-62 is subject to N6-(pyridoxal phosphate)lysine.

The protein belongs to the serine/threonine dehydratase family. Requires pyridoxal 5'-phosphate as cofactor.

The protein resides in the cytoplasm. The catalysed reaction is L-serine = pyruvate + NH4(+). It functions in the pathway carbohydrate biosynthesis; gluconeogenesis. The polypeptide is L-serine dehydratase (sds) (Dictyostelium discoideum (Social amoeba)).